We begin with the raw amino-acid sequence, 50 residues long: Small ribosomal subunit protein uS14 (50 aa).

The Zn(2+) site is built by C15, C18, C33, and C36.

Belongs to the universal ribosomal protein uS14 family. Zinc-binding uS14 subfamily. Part of the 30S ribosomal subunit. It depends on Zn(2+) as a cofactor.

Functionally, binds 16S rRNA, required for the assembly of 30S particles. This is Small ribosomal subunit protein uS14 from Methanothermobacter thermautotrophicus (strain ATCC 29096 / DSM 1053 / JCM 10044 / NBRC 100330 / Delta H) (Methanobacterium thermoautotrophicum).